The following is an 808-amino-acid chain: Potassium transporter 5 (808 aa).

Over 1-65 the chain is Cytoplasmic; that stretch reads MAEEVGETRG…NQVNWKKTLS (65 aa). The chain crosses the membrane as a helical span at residues 66-86; it reads LTFQSIGVVYGDIGTSPLYVY. Over 87 to 102 the chain is Extracellular; sequence ESTFPDKIGSKEDILG. A helical transmembrane segment spans residues 103–123; the sequence is VLSLIIYTLVLLPMLKYVFIV. Residues 124-189 are Cytoplasmic-facing; sequence LRANDNGDGG…EKMENSKNIK (66 aa). A helical membrane pass occupies residues 190 to 210; sequence ILLFLVTILGTSMVIGDGVLT. At 211–221 the chain is on the extracellular side; that stretch reads PCISVLSAVSG. The chain crosses the membrane as a helical span at residues 222-242; the sequence is IGSLGQDAVVGISIAILIVLF. Residues 243 to 251 are Cytoplasmic-facing; it reads CAQRLGTDK. A helical membrane pass occupies residues 252 to 272; it reads VGFSFAPIILLWFSFIGGIGL. The Extracellular segment spans residues 273–302; the sequence is YNLFKYDVSVLRAFNPKYMFDYFKRNGKQG. A helical membrane pass occupies residues 303-323; the sequence is WISLGGVVLAVTGTEAMFADL. Over 324 to 327 the chain is Cytoplasmic; that stretch reads GHFN. A helical transmembrane segment spans residues 328 to 348; it reads VQAIQISFSGIVFPALLCAYA. Residues 349–379 are Extracellular-facing; that stretch reads GQAAYLTKFPDDVSKTFYKSIPDPLYWPTFV. A helical membrane pass occupies residues 380–400; that stretch reads VAVAAAIIASQAMISGAFAII. Topologically, residues 401–424 are cytoplasmic; that stretch reads SQSLSLGCFPRVKVIHTSAKYEGQ. A helical membrane pass occupies residues 425-445; it reads VYIPEVNYILMIACIMVCLGF. Residues 446–456 are Extracellular-facing; sequence KTTEKIGNAYG. A helical membrane pass occupies residues 457–477; it reads IAVVAVMVITTCMVTIIMLVV. The Cytoplasmic segment spans residues 478 to 482; sequence WRTKM. The chain crosses the membrane as a helical span at residues 483-503; that stretch reads IWIAFFFFGFICIEAVYLSSV. Residues 504–510 lie on the Extracellular side of the membrane; sequence LYKFKDG. The chain crosses the membrane as a helical span at residues 511–531; the sequence is GFLPLAFSFFLMIIMGIWHYI. Topologically, residues 532–808 are cytoplasmic; that stretch reads HKERYMYELK…LLRVGMTYEI (277 aa). Positions 699 to 722 are disordered; sequence LQQPNPSRVSSGSIHSNSGIKSTK.

The protein belongs to the HAK/KUP transporter (TC 2.A.72.3) family. In terms of tissue distribution, expressed in the roots.

It is found in the cell membrane. The enzyme catalyses K(+)(in) = K(+)(out). High-affinity potassium transporter that functions under low potassium conditions. Involved in the positive regulation of salt tolerance under salt stress. In Manihot esculenta (Cassava), this protein is Potassium transporter 5.